Reading from the N-terminus, the 362-residue chain is tRNA-specific 2-thiouridylase MnmA (362 aa).

Residues 13–20 (GLSGGVDS) and methionine 39 each bind ATP. Residues 99 to 101 (NPD) are interaction with target base in tRNA. Residue cysteine 104 is the Nucleophile of the active site. Cysteine 104 and cysteine 200 are disulfide-bonded. Glycine 128 contacts ATP. Positions 150–152 (KDQ) are interaction with tRNA. Cysteine 200 (cysteine persulfide intermediate) is an active-site residue.

It belongs to the MnmA/TRMU family.

The protein resides in the cytoplasm. It carries out the reaction S-sulfanyl-L-cysteinyl-[protein] + uridine(34) in tRNA + AH2 + ATP = 2-thiouridine(34) in tRNA + L-cysteinyl-[protein] + A + AMP + diphosphate + H(+). Functionally, catalyzes the 2-thiolation of uridine at the wobble position (U34) of tRNA, leading to the formation of s(2)U34. This chain is tRNA-specific 2-thiouridylase MnmA, found in Coxiella burnetii (strain Dugway 5J108-111).